The chain runs to 207 residues: LexA repressor (207 aa).

The H-T-H motif DNA-binding region spans 28–48 (RAEIARELGFRSANAAEEHLK). Active-site for autocatalytic cleavage activity residues include Ser124 and Lys161.

This sequence belongs to the peptidase S24 family. In terms of assembly, homodimer.

The enzyme catalyses Hydrolysis of Ala-|-Gly bond in repressor LexA.. Functionally, represses a number of genes involved in the response to DNA damage (SOS response), including recA and lexA. In the presence of single-stranded DNA, RecA interacts with LexA causing an autocatalytic cleavage which disrupts the DNA-binding part of LexA, leading to derepression of the SOS regulon and eventually DNA repair. The chain is LexA repressor from Aliivibrio salmonicida (strain LFI1238) (Vibrio salmonicida (strain LFI1238)).